The chain runs to 77 residues: uncharacterized protein (77 aa).

Residues 1 to 10 (MFNNKGRRNV) are compositionally biased toward basic residues. A disordered region spans residues 1 to 21 (MFNNKGRRNVRNNEVRRNVPV). The segment covering 11 to 21 (RNNEVRRNVPV) has biased composition (basic and acidic residues). The region spanning 20–77 (PVKEGETYTVTIEDMGRGGDGIARVEGFVVFVPETQKGETVNVKITAVKSKFAFAEKI) is the TRAM domain.

This is an uncharacterized protein from Methanocaldococcus jannaschii (strain ATCC 43067 / DSM 2661 / JAL-1 / JCM 10045 / NBRC 100440) (Methanococcus jannaschii).